We begin with the raw amino-acid sequence, 128 residues long: NADH dehydrogenase [ubiquinone] 1 beta subcomplex subunit 6 (128 aa).

The residue at position 2 (Ser-2) is an N-acetylserine. N6-acetyllysine is present on Lys-24. Residues 64 to 86 form a helical membrane-spanning segment; it reads TYRHSIFAFTHVLIPVWIIHYYL.

It belongs to the complex I NDUFB6 subunit family. In terms of assembly, complex I is composed of 45 different subunits.

It is found in the mitochondrion inner membrane. Functionally, accessory subunit of the mitochondrial membrane respiratory chain NADH dehydrogenase (Complex I), that is believed not to be involved in catalysis. Complex I functions in the transfer of electrons from NADH to the respiratory chain. The immediate electron acceptor for the enzyme is believed to be ubiquinone. This is NADH dehydrogenase [ubiquinone] 1 beta subcomplex subunit 6 (NDUFB6) from Bos taurus (Bovine).